A 295-amino-acid chain; its full sequence is Gamma-glutamyl-L-1-hydroxyisopropylamide hydrolase (295 aa).

Residues 5–221 (RILICDGNTE…LRESARSLVE (217 aa)) enclose the Glutamine amidotransferase type-1 domain. C104 acts as the Nucleophile in catalysis. Catalysis depends on residues H200 and E202.

The enzyme catalyses gamma-L-glutamyl-L-alaninol + H2O = L-alaninol + L-glutamate. In terms of biological role, involved in the degradation of isopropylamine, which is a constituent of the herbicides atrazine. Catalyzes the hydrolysis of gamma-glutamyl-L-alaninol (GALO) to L-alaninol and L-glutamate. It can also uses gamma-glutamyl-isopropylamide, gamma-glutamyl-ethylamide, L-glutamine, and gamma-glutamyl-p-nitroanilide. The chain is Gamma-glutamyl-L-1-hydroxyisopropylamide hydrolase (ipuF) from Pseudomonas sp.